The chain runs to 408 residues: GDSL esterase/lipase At1g54790 (408 aa).

Residues 1 to 24 (MNITKMKLFYVILFFISSLQISNS) form the signal peptide. Ser38 (nucleophile) is an active-site residue. 3 N-linked (GlcNAc...) asparagine glycosylation sites follow: Asn273, Asn289, and Asn361. Active-site residues include Asp370 and His373.

Belongs to the 'GDSL' lipolytic enzyme family.

The protein localises to the secreted. The protein is GDSL esterase/lipase At1g54790 of Arabidopsis thaliana (Mouse-ear cress).